A 245-amino-acid polypeptide reads, in one-letter code: Aliphatic sulfonates import ATP-binding protein SsuB 1 (245 aa).

The region spanning 9 to 227 (LDLVGIGHRY…HRGDAQLAAW (219 aa)) is the ABC transporter domain. ATP is bound at residue 41-48 (GPSGVGKS).

The protein belongs to the ABC transporter superfamily. Aliphatic sulfonates importer (TC 3.A.1.17.2) family. The complex is composed of two ATP-binding proteins (SsuB), two transmembrane proteins (SsuC) and a solute-binding protein (SsuA).

It localises to the cell membrane. It catalyses the reaction ATP + H2O + aliphatic sulfonate-[sulfonate-binding protein]Side 1 = ADP + phosphate + aliphatic sulfonateSide 2 + [sulfonate-binding protein]Side 1.. Part of the ABC transporter complex SsuABC involved in aliphatic sulfonates import. Responsible for energy coupling to the transport system. The polypeptide is Aliphatic sulfonates import ATP-binding protein SsuB 1 (Rhodococcus jostii (strain RHA1)).